A 109-amino-acid chain; its full sequence is Translation initiation factor IF-1, chloroplastic (109 aa).

One can recognise an S1-like domain in the interval 18 to 93 (KSLNQEKENL…TRGRIIYRLK (76 aa)).

Belongs to the IF-1 family. As to quaternary structure, component of the 30S ribosomal translation pre-initiation complex which assembles on the 30S ribosome in the order IF-2 and IF-3, IF-1 and N-formylmethionyl-tRNA(fMet); mRNA recruitment can occur at any time during PIC assembly.

The protein resides in the plastid. The protein localises to the chloroplast. One of the essential components for the initiation of protein synthesis. Stabilizes the binding of IF-2 and IF-3 on the 30S subunit to which N-formylmethionyl-tRNA(fMet) subsequently binds. Helps modulate mRNA selection, yielding the 30S pre-initiation complex (PIC). Upon addition of the 50S ribosomal subunit IF-1, IF-2 and IF-3 are released leaving the mature 70S translation initiation complex. The protein is Translation initiation factor IF-1, chloroplastic of Tupiella akineta (Green alga).